An 84-amino-acid polypeptide reads, in one-letter code: DNA-directed RNA polymerase subunit Rpo5 (84 aa).

It belongs to the archaeal Rpo5/eukaryotic RPB5 RNA polymerase subunit family. In terms of assembly, part of the RNA polymerase complex.

Its subcellular location is the cytoplasm. It catalyses the reaction RNA(n) + a ribonucleoside 5'-triphosphate = RNA(n+1) + diphosphate. Its function is as follows. DNA-dependent RNA polymerase (RNAP) catalyzes the transcription of DNA into RNA using the four ribonucleoside triphosphates as substrates. This chain is DNA-directed RNA polymerase subunit Rpo5, found in Saccharolobus islandicus (strain Y.N.15.51 / Yellowstone #2) (Sulfolobus islandicus).